Reading from the N-terminus, the 442-residue chain is Trigger factor (442 aa).

A PPIase FKBP-type domain is found at 163–248; that stretch reads NDLVTINYCI…ILNVEEKQEN (86 aa).

The protein belongs to the FKBP-type PPIase family. Tig subfamily.

The protein resides in the cytoplasm. The catalysed reaction is [protein]-peptidylproline (omega=180) = [protein]-peptidylproline (omega=0). Involved in protein export. Acts as a chaperone by maintaining the newly synthesized protein in an open conformation. Functions as a peptidyl-prolyl cis-trans isomerase. The chain is Trigger factor from Buchnera aphidicola subsp. Schizaphis graminum (strain Sg).